The following is a 450-amino-acid chain: Chromosomal replication initiator protein DnaA (450 aa).

The tract at residues 1–77 is domain I, interacts with DnaA modulators; the sequence is MTENEQIFWN…EVYNAQIAVD (77 aa). The segment at 77–109 is domain II; it reads DYVYEDDLMIEQQHQGQQGYTEQAFQQLPAVQS. The tract at residues 110–328 is domain III, AAA+ region; that stretch reads DLNPKYSFDN…GALKDISLVA (219 aa). Glycine 154, glycine 156, lysine 157, and threonine 158 together coordinate ATP. The tract at residues 329–450 is domain IV, binds dsDNA; sequence NFKQIDTITV…EIETIKNKIK (122 aa).

The protein belongs to the DnaA family. Oligomerizes as a right-handed, spiral filament on DNA at oriC.

It localises to the cytoplasm. Its function is as follows. Plays an essential role in the initiation and regulation of chromosomal replication. ATP-DnaA binds to the origin of replication (oriC) to initiate formation of the DNA replication initiation complex once per cell cycle. Binds the DnaA box (a 9 base pair repeat at the origin) and separates the double-stranded (ds)DNA. Forms a right-handed helical filament on oriC DNA; dsDNA binds to the exterior of the filament while single-stranded (ss)DNA is stabiized in the filament's interior. The ATP-DnaA-oriC complex binds and stabilizes one strand of the AT-rich DNA unwinding element (DUE), permitting loading of DNA polymerase. After initiation quickly degrades to an ADP-DnaA complex that is not apt for DNA replication. Binds acidic phospholipids. This chain is Chromosomal replication initiator protein DnaA, found in Streptococcus equi subsp. equi (strain 4047).